Reading from the N-terminus, the 108-residue chain is Protein SMALL AUXIN UP-REGULATED RNA 51 (108 aa).

The protein belongs to the ARG7 family. In terms of tissue distribution, expressed in organ primordia. Hardly observed in leaves.

The protein resides in the cell membrane. Its function is as follows. Provide a mechanistic link between auxin and plasma membrane H(+)-ATPases (PM H(+)-ATPases, e.g. AHA1 and AHA2), and triggers PM H(+)-ATPases activity by promoting phosphorylation of their C-terminal autoinhibitory domain as a result of PP2C-D subfamily of type 2C phosphatases inhibition, thus leading to the acidification of the apoplast and the facilitation of solutes and water uptake to drive cell expansion. Triggers plant growth probably by promoting cell elongation. Regulates branch angles and bending. The protein is Protein SMALL AUXIN UP-REGULATED RNA 51 of Arabidopsis thaliana (Mouse-ear cress).